Reading from the N-terminus, the 199-residue chain is Recombination protein RecR (199 aa).

Residues 57-72 (CQSCRTFTEQDLCPIC) form a C4-type zinc finger. The Toprim domain maps to 81 to 176 (GIICVVETPA…VISRIAHGVP (96 aa)).

It belongs to the RecR family.

In terms of biological role, may play a role in DNA repair. It seems to be involved in an RecBC-independent recombinational process of DNA repair. It may act with RecF and RecO. In Shewanella frigidimarina (strain NCIMB 400), this protein is Recombination protein RecR.